The sequence spans 311 residues: MRLPTRHLLGIEGLHPRDISALLDLAESYVLLNRSGKTRRDVLRGRTLINLFFEDSTRTRTSFELAGKRLGADVINMSVSTSSVSKGETLLDTAATLNAMNCDLLVVRHKASGAPALLAQKVDAAVINAGDGMHEHPTQALLDALTIRRNKGTLAGLTVAICGDIAHSRVARSNLLLLTAMGSRVRVVGPPTLIPSGIDQFGATVFHDMREGLRDADIVMALRLQTERMSAGLIPSAREFFTFYGLDAAKLAMAKPDALVMHPGPMNRGVEIDSQVADDATRSVIREQVEMGVAIRMAVLDVLARTALAHA.

The carbamoyl phosphate site is built by Arg-58 and Thr-59. Residue Lys-86 coordinates L-aspartate. 3 residues coordinate carbamoyl phosphate: Arg-108, His-136, and Gln-139. 2 residues coordinate L-aspartate: Arg-169 and Arg-223. Gly-264 and Pro-265 together coordinate carbamoyl phosphate.

This sequence belongs to the aspartate/ornithine carbamoyltransferase superfamily. ATCase family. Heterododecamer (2C3:3R2) of six catalytic PyrB chains organized as two trimers (C3), and six regulatory PyrI chains organized as three dimers (R2).

It catalyses the reaction carbamoyl phosphate + L-aspartate = N-carbamoyl-L-aspartate + phosphate + H(+). Its pathway is pyrimidine metabolism; UMP biosynthesis via de novo pathway; (S)-dihydroorotate from bicarbonate: step 2/3. Catalyzes the condensation of carbamoyl phosphate and aspartate to form carbamoyl aspartate and inorganic phosphate, the committed step in the de novo pyrimidine nucleotide biosynthesis pathway. The sequence is that of Aspartate carbamoyltransferase catalytic subunit from Acidiphilium cryptum (strain JF-5).